The following is a 215-amino-acid chain: 3-dehydroquinate dehydratase (215 aa).

3-dehydroquinate is bound by residues 30–32 (EVR) and Arg62. His114 functions as the Proton donor/acceptor in the catalytic mechanism. The active-site Schiff-base intermediate with substrate is the Lys140. Arg178 and Gln201 together coordinate 3-dehydroquinate.

Belongs to the type-I 3-dehydroquinase family. Homodimer.

The enzyme catalyses 3-dehydroquinate = 3-dehydroshikimate + H2O. It participates in metabolic intermediate biosynthesis; chorismate biosynthesis; chorismate from D-erythrose 4-phosphate and phosphoenolpyruvate: step 3/7. Its function is as follows. Involved in the third step of the chorismate pathway, which leads to the biosynthesis of aromatic amino acids. Catalyzes the cis-dehydration of 3-dehydroquinate (DHQ) and introduces the first double bond of the aromatic ring to yield 3-dehydroshikimate. The polypeptide is 3-dehydroquinate dehydratase (Methanopyrus kandleri (strain AV19 / DSM 6324 / JCM 9639 / NBRC 100938)).